We begin with the raw amino-acid sequence, 969 residues long: Protein translocase subunit SecA (969 aa).

Residues Gln-99, 117 to 121 (GEGKT), and Asp-631 contribute to the ATP site.

It belongs to the SecA family. In terms of assembly, monomer and homodimer. Part of the essential Sec protein translocation apparatus which comprises SecA, SecYEG and auxiliary proteins SecDF. Other proteins may also be involved.

The protein resides in the cell inner membrane. It localises to the cytoplasm. The enzyme catalyses ATP + H2O + cellular proteinSide 1 = ADP + phosphate + cellular proteinSide 2.. In terms of biological role, part of the Sec protein translocase complex. Interacts with the SecYEG preprotein conducting channel. Has a central role in coupling the hydrolysis of ATP to the transfer of proteins into and across the cell membrane, serving as an ATP-driven molecular motor driving the stepwise translocation of polypeptide chains across the membrane. The chain is Protein translocase subunit SecA from Chlamydia trachomatis serovar D (strain ATCC VR-885 / DSM 19411 / UW-3/Cx).